We begin with the raw amino-acid sequence, 268 residues long: Shikimate dehydrogenase (NADP(+)) (268 aa).

Shikimate is bound by residues 14-16 (SKS) and Thr-61. Catalysis depends on Lys-65, which acts as the Proton acceptor. Positions 86 and 102 each coordinate shikimate. Residues 126 to 130 (GAGGA), 149 to 154 (NRTFLK), and Met-213 each bind NADP(+). A shikimate-binding site is contributed by Tyr-215. Gly-238 contacts NADP(+).

Belongs to the shikimate dehydrogenase family. Homodimer.

It carries out the reaction shikimate + NADP(+) = 3-dehydroshikimate + NADPH + H(+). The protein operates within metabolic intermediate biosynthesis; chorismate biosynthesis; chorismate from D-erythrose 4-phosphate and phosphoenolpyruvate: step 4/7. Involved in the biosynthesis of the chorismate, which leads to the biosynthesis of aromatic amino acids. Catalyzes the reversible NADPH linked reduction of 3-dehydroshikimate (DHSA) to yield shikimate (SA). This chain is Shikimate dehydrogenase (NADP(+)), found in Haemophilus influenzae (strain PittGG).